Here is a 716-residue protein sequence, read N- to C-terminus: Fatty acid oxidation complex subunit alpha (716 aa).

The segment at Met-1–Ala-189 is enoyl-CoA hydratase/isomerase. Asp-296 contacts substrate. The interval Lys-311–Ala-716 is 3-hydroxyacyl-CoA dehydrogenase. NAD(+) is bound by residues Met-324, Asp-343, Val-400–Glu-402, Lys-407, and Ser-429. Residue His-450 is the For 3-hydroxyacyl-CoA dehydrogenase activity of the active site. Asn-453 serves as a coordination point for NAD(+). Positions 500 and 660 each coordinate substrate.

It in the N-terminal section; belongs to the enoyl-CoA hydratase/isomerase family. The protein in the C-terminal section; belongs to the 3-hydroxyacyl-CoA dehydrogenase family. As to quaternary structure, heterotetramer of two alpha chains (FadB) and two beta chains (FadA).

It carries out the reaction a (3S)-3-hydroxyacyl-CoA + NAD(+) = a 3-oxoacyl-CoA + NADH + H(+). The enzyme catalyses a (3S)-3-hydroxyacyl-CoA = a (2E)-enoyl-CoA + H2O. It catalyses the reaction a 4-saturated-(3S)-3-hydroxyacyl-CoA = a (3E)-enoyl-CoA + H2O. The catalysed reaction is (3S)-3-hydroxybutanoyl-CoA = (3R)-3-hydroxybutanoyl-CoA. It carries out the reaction a (3Z)-enoyl-CoA = a 4-saturated (2E)-enoyl-CoA. The enzyme catalyses a (3E)-enoyl-CoA = a 4-saturated (2E)-enoyl-CoA. It participates in lipid metabolism; fatty acid beta-oxidation. In terms of biological role, involved in the aerobic and anaerobic degradation of long-chain fatty acids via beta-oxidation cycle. Catalyzes the formation of 3-oxoacyl-CoA from enoyl-CoA via L-3-hydroxyacyl-CoA. It can also use D-3-hydroxyacyl-CoA and cis-3-enoyl-CoA as substrate. This is Fatty acid oxidation complex subunit alpha from Shewanella baltica (strain OS195).